The chain runs to 317 residues: Transaldolase (317 aa).

The active-site Schiff-base intermediate with substrate is K132.

This sequence belongs to the transaldolase family. Type 1 subfamily. Homodimer.

Its subcellular location is the cytoplasm. It catalyses the reaction D-sedoheptulose 7-phosphate + D-glyceraldehyde 3-phosphate = D-erythrose 4-phosphate + beta-D-fructose 6-phosphate. The protein operates within carbohydrate degradation; pentose phosphate pathway; D-glyceraldehyde 3-phosphate and beta-D-fructose 6-phosphate from D-ribose 5-phosphate and D-xylulose 5-phosphate (non-oxidative stage): step 2/3. Functionally, transaldolase is important for the balance of metabolites in the pentose-phosphate pathway. This is Transaldolase from Shewanella amazonensis (strain ATCC BAA-1098 / SB2B).